A 205-amino-acid chain; its full sequence is Enhancer of split mgamma protein (205 aa).

One can recognise a bHLH domain in the interval 15 to 72 (YRKVMKPMLERKRRARINKCLDELKDLMVATLESEGEHVTRLEKADILELTVTHLQKM). In terms of domain architecture, Orange spans 93–126 (FRSGYIHAVNEVSRSLSQLPGMNVSLGTQLMTHL). The short motif at 202–205 (WRPW) is the WRPW motif element.

As to quaternary structure, homodimer. Heterodimer with dpn. Might form higher-order oligomers. Transcription repression requires formation of a complex with a corepressor protein (Groucho). In terms of tissue distribution, expressed in sensory organ precursors in the wing, leg and eye imaginal disk.

It is found in the nucleus. Functionally, transcriptional repressor of genes that require a bHLH protein for their transcription. May serve as a transcriptional regulator of the Achaete-scute complex (AS-C) genes. Contributes to the neural-epidermal lineage decision during early neurogenesis. Part of the Notch signaling pathway, plays a role in neuroblasts proliferation in embryos and larvae. In the larval brain, together with other self-renewal transcriptional repressors such as klu and dpn, required for type II neuroblast self-renewal and for maintaining erm in an inactive state in intermediate neural progenitors (INP) derived from type II neuroblasts. This is Enhancer of split mgamma protein from Drosophila melanogaster (Fruit fly).